The chain runs to 471 residues: Vanillate/3-O-methylgallate O-demethylase (471 aa).

Substrate is bound at residue Tyr-31. Position 57 (Gln-57) interacts with (6S)-5,6,7,8-tetrahydrofolate. His-60 contributes to the substrate binding site. (6S)-5,6,7,8-tetrahydrofolate-binding residues include Gln-93 and Val-120. Residue Arg-122 participates in substrate binding. The (6S)-5,6,7,8-tetrahydrofolate site is built by Gln-165 and Glu-215. Substrate is bound at residue 247–250; sequence YPSN. A (6S)-5,6,7,8-tetrahydrofolate-binding site is contributed by Trp-256.

This sequence belongs to the GcvT family. As to quaternary structure, homodimer.

The enzyme catalyses vanillate + (6S)-5,6,7,8-tetrahydrofolate = (6S)-5-methyl-5,6,7,8-tetrahydrofolate + 3,4-dihydroxybenzoate. It carries out the reaction 3-O-methylgallate + (6S)-5,6,7,8-tetrahydrofolate = 3,4,5-trihydroxybenzoate + (6S)-5-methyl-5,6,7,8-tetrahydrofolate. It functions in the pathway secondary metabolite metabolism; lignin degradation. Functionally, involved in the catabolism of vanillate and syringate. Catalyzes the transfer of a methyl moiety from vanillate or 3-O-methylgallate (3MGA) to tetrahydrofolate, forming protocatechuate (PCA) or gallate, respectively, and methyl-tetrahydrofolate. Has similar activities with both substrates. Cannot use syringate. Uses an ordered, sequential kinetic mechanism. This chain is Vanillate/3-O-methylgallate O-demethylase, found in Sphingobium sp. (strain NBRC 103272 / SYK-6).